We begin with the raw amino-acid sequence, 131 residues long: NADPH-dependent 7-cyano-7-deazaguanine reductase (131 aa).

Cys47 serves as the catalytic Thioimide intermediate. The active-site Proton donor is Asp54. Substrate is bound by residues 69 to 71 (MEL) and 88 to 89 (HE).

This sequence belongs to the GTP cyclohydrolase I family. QueF type 1 subfamily.

The protein resides in the cytoplasm. The catalysed reaction is 7-aminomethyl-7-carbaguanine + 2 NADP(+) = 7-cyano-7-deazaguanine + 2 NADPH + 3 H(+). It functions in the pathway tRNA modification; tRNA-queuosine biosynthesis. In terms of biological role, catalyzes the NADPH-dependent reduction of 7-cyano-7-deazaguanine (preQ0) to 7-aminomethyl-7-deazaguanine (preQ1). The protein is NADPH-dependent 7-cyano-7-deazaguanine reductase of Microcystis aeruginosa (strain NIES-843 / IAM M-2473).